We begin with the raw amino-acid sequence, 268 residues long: MKRVALVIQYDGSYFSGWQRQKNAISVQETIENCLFKISNQIIKTFASGRTDAGVHASGQVIHFDIDFLIPIDRYADVLNSRLPHTIRILESVEVKSSWHACYSAVYRHYRYVINNNKIPNLFLNKWSWHRYQKYLDEVSMSIALDGMIGEHDFFAFQKSGSNRSTSVTTIKDIKLERTEDLILIDIKATGFLYGMVRSIVGQLVLVGEKKITPDIFKDRWVLKKKHDVRESAPAKGLCFVNSVYEENIFKRINKNDLFPKFVIRGYS.

The active-site Nucleophile is Asp52. Residue Tyr110 participates in substrate binding.

The protein belongs to the tRNA pseudouridine synthase TruA family. Homodimer.

It carries out the reaction uridine(38/39/40) in tRNA = pseudouridine(38/39/40) in tRNA. Its function is as follows. Formation of pseudouridine at positions 38, 39 and 40 in the anticodon stem and loop of transfer RNAs. The sequence is that of tRNA pseudouridine synthase A from Prochlorococcus marinus subsp. pastoris (strain CCMP1986 / NIES-2087 / MED4).